A 203-amino-acid chain; its full sequence is Small ribosomal subunit protein uS4c (203 aa).

The S4 RNA-binding domain maps to 89-152 (MRLDNILFRL…QSRTLIQNSL (64 aa)).

It belongs to the universal ribosomal protein uS4 family. Part of the 30S ribosomal subunit. Contacts protein S5. The interaction surface between S4 and S5 is involved in control of translational fidelity.

The protein resides in the plastid. Functionally, one of the primary rRNA binding proteins, it binds directly to 16S rRNA where it nucleates assembly of the body of the 30S subunit. With S5 and S12 plays an important role in translational accuracy. The sequence is that of Small ribosomal subunit protein uS4c (rps4) from Orobanche minor (Small broomrape).